Reading from the N-terminus, the 170-residue chain is Adenine phosphoribosyltransferase (170 aa).

It belongs to the purine/pyrimidine phosphoribosyltransferase family. As to quaternary structure, homodimer.

The protein resides in the cytoplasm. It carries out the reaction AMP + diphosphate = 5-phospho-alpha-D-ribose 1-diphosphate + adenine. Its pathway is purine metabolism; AMP biosynthesis via salvage pathway; AMP from adenine: step 1/1. Functionally, catalyzes a salvage reaction resulting in the formation of AMP, that is energically less costly than de novo synthesis. This chain is Adenine phosphoribosyltransferase, found in Prochlorococcus marinus (strain MIT 9312).